A 288-amino-acid chain; its full sequence is Ribosomal RNA small subunit methyltransferase A (288 aa).

Residues Asn18, Leu20, Gly45, Glu66, Asp91, and Asn118 each coordinate S-adenosyl-L-methionine.

Belongs to the class I-like SAM-binding methyltransferase superfamily. rRNA adenine N(6)-methyltransferase family. RsmA subfamily.

It is found in the cytoplasm. The enzyme catalyses adenosine(1518)/adenosine(1519) in 16S rRNA + 4 S-adenosyl-L-methionine = N(6)-dimethyladenosine(1518)/N(6)-dimethyladenosine(1519) in 16S rRNA + 4 S-adenosyl-L-homocysteine + 4 H(+). Its function is as follows. Specifically dimethylates two adjacent adenosines (A1518 and A1519) in the loop of a conserved hairpin near the 3'-end of 16S rRNA in the 30S particle. May play a critical role in biogenesis of 30S subunits. This is Ribosomal RNA small subunit methyltransferase A from Mannheimia succiniciproducens (strain KCTC 0769BP / MBEL55E).